The following is a 58-amino-acid chain: MAVPKKKTSKSKRNQRHAVWKAKAATAAQRALSIGKSVLSGRAQGFVYPVAEADDSES.

It belongs to the bacterial ribosomal protein bL32 family.

The polypeptide is Large ribosomal subunit protein bL32 (Synechococcus sp. (strain WH7803)).